The following is a 461-amino-acid chain: Protein-serine O-palmitoleoyltransferase porcupine (461 aa).

At Met1–Cys17 the chain is on the cytoplasmic side. The chain crosses the membrane as a helical span at residues Leu18 to Ala38. The Extracellular segment spans residues Cys39–His66. A helical transmembrane segment spans residues Phe67–Phe87. The Cytoplasmic portion of the chain corresponds to Leu88–Arg95. Residues Gly96–Asp116 form a helical membrane-spanning segment. Over Thr117–Pro152 the chain is Extracellular. The helical transmembrane segment at Val153–Phe173 threads the bilayer. The Cytoplasmic segment spans residues His174 to Ala198. A lipid anchor (S-palmitoyl cysteine) is attached at Cys187. Residues Leu199–Ile219 traverse the membrane as a helical segment. Over Pro220 to His252 the chain is Extracellular. Residues Phe253–Phe273 traverse the membrane as a helical segment. The Cytoplasmic segment spans residues Thr274–Ser337. A helical membrane pass occupies residues Ala338–Thr358. Residue His341 is part of the active site. Residues Tyr359 to Arg396 lie on the Extracellular side of the membrane. Residues Ala397–Phe417 traverse the membrane as a helical segment. At Asp418–Gly461 the chain is on the cytoplasmic side.

The protein belongs to the membrane-bound acyltransferase family. Porcupine subfamily. As to quaternary structure, interacts with WNT1, WNT3, WNT3A, WNT4, WNT5A, WNT5B, WNT6, WNT7A and WNT7B. As to expression, isoform 1 is expressed in fetal brain, brain, amygdala, caudate nucleus, cerebellum, hippocampus, pituitary, thalamus, heart, skeletal muscle and testis. Isoform 4 is expressed in amygdala, corpus callosum, hippocampus, spinal cord, kidney, liver, lung, spleen, uterus, testis. Isoform 2 and isoform 3 are expressed in substantia negra, spinal cord, heart and lung.

The protein resides in the endoplasmic reticulum membrane. The enzyme catalyses [Wnt protein]-L-serine + (9Z)-hexadecenoyl-CoA = [Wnt protein]-O-(9Z)-hexadecenoyl-L-serine + CoA. Functionally, protein-serine O-palmitoleoyltransferase that acts as a key regulator of the Wnt signaling pathway by mediating the attachment of palmitoleate, a 16-carbon monounsaturated fatty acid (C16:1(9Z)), to Wnt proteins. Serine palmitoleoylation of WNT proteins is required for efficient binding to frizzled receptors. The sequence is that of Protein-serine O-palmitoleoyltransferase porcupine from Homo sapiens (Human).